The primary structure comprises 451 residues: Trigger factor (451 aa).

The region spanning 165–250 is the PPIase FKBP-type domain; it reads DDKLTIDFEG…LRQIQAREAL (86 aa).

It belongs to the FKBP-type PPIase family. Tig subfamily.

It localises to the cytoplasm. It catalyses the reaction [protein]-peptidylproline (omega=180) = [protein]-peptidylproline (omega=0). Its function is as follows. Involved in protein export. Acts as a chaperone by maintaining the newly synthesized protein in an open conformation. Functions as a peptidyl-prolyl cis-trans isomerase. This Helicobacter pylori (strain Shi470) protein is Trigger factor.